A 334-amino-acid chain; its full sequence is Glycerol-3-phosphate dehydrogenase [NAD(P)+] (334 aa).

3 residues coordinate NADPH: Trp-13, Arg-33, and Lys-106. Positions 106, 137, and 139 each coordinate sn-glycerol 3-phosphate. Ala-141 is an NADPH binding site. Sn-glycerol 3-phosphate contacts are provided by Lys-192, Asp-245, Ser-255, Arg-256, and Asn-257. Lys-192 (proton acceptor) is an active-site residue. Arg-256 contacts NADPH. Val-280 and Glu-282 together coordinate NADPH.

This sequence belongs to the NAD-dependent glycerol-3-phosphate dehydrogenase family.

Its subcellular location is the cytoplasm. The enzyme catalyses sn-glycerol 3-phosphate + NAD(+) = dihydroxyacetone phosphate + NADH + H(+). The catalysed reaction is sn-glycerol 3-phosphate + NADP(+) = dihydroxyacetone phosphate + NADPH + H(+). Its pathway is membrane lipid metabolism; glycerophospholipid metabolism. Functionally, catalyzes the reduction of the glycolytic intermediate dihydroxyacetone phosphate (DHAP) to sn-glycerol 3-phosphate (G3P), the key precursor for phospholipid synthesis. This chain is Glycerol-3-phosphate dehydrogenase [NAD(P)+], found in Chlamydia trachomatis serovar L2 (strain ATCC VR-902B / DSM 19102 / 434/Bu).